We begin with the raw amino-acid sequence, 506 residues long: MQNFKELGISDNTVQSLESMGFKEPTPIQKDSIPYALQGIDILGQAQTGTGKTGAFGIPLIEKVVGKQGVQSLILAPTRELAMQVAEQLREFSRGQGVQVVTVFGGMPIERQIKALKKGPQIVVGTPGRVIDHLNRRTLKTDGIHTLILDEADEMMNMGFIDDMRFIMDKIPAVQRQTMLFSATMPKAIQALVQQFMKSPKIIKTMNNEMSDPQIEEFYTIVKELEKFDTFTNFLDVHQPELAIVFGRTKRRVDELTSALISKGYKAEGLHGDITQAKRLEVLKKFKNDQINILVATDVAARGLDISGVSHVYNFDIPQDTESYTHRIGRTGRAGKEGIAVTFVNPIEMDYIRQIEDANGRKMSALRPPHRKEVLQAREDDIKEKVENWMSKESESRLKRISTELLNEYNDVDLVAALLQELIEANDEVEVQLTFEKPLSRKGRNGKPSGSRNRNSKRGNPKFDSKSKRSKGYSSKKKSTKKFDRKEKSSGGSRPMKGRTFADHQK.

Residues 2–30 carry the Q motif motif; that stretch reads QNFKELGISDNTVQSLESMGFKEPTPIQK. The Helicase ATP-binding domain occupies 33–203; the sequence is IPYALQGIDI…QQFMKSPKII (171 aa). 46 to 53 contacts ATP; the sequence is AQTGTGKT. The DEAD box signature appears at 150–153; the sequence is DEAD. Residues 214-375 enclose the Helicase C-terminal domain; it reads QIEEFYTIVK…LRPPHRKEVL (162 aa). A disordered region spans residues 436 to 506; sequence EKPLSRKGRN…KGRTFADHQK (71 aa). Positions 468–480 are enriched in basic residues; sequence KRSKGYSSKKKST.

Belongs to the DEAD box helicase family. CshA subfamily. As to quaternary structure, oligomerizes, may be a member of the RNA degradosome.

It localises to the cytoplasm. The catalysed reaction is ATP + H2O = ADP + phosphate + H(+). In terms of biological role, DEAD-box RNA helicase possibly involved in RNA degradation. Unwinds dsRNA in both 5'- and 3'-directions, has RNA-dependent ATPase activity. The sequence is that of DEAD-box ATP-dependent RNA helicase CshA from Staphylococcus aureus (strain MRSA252).